The sequence spans 145 residues: Selenoprotein M (145 aa).

The signal sequence occupies residues 1–23 (MSLLLPPLALLLLLAALVAPATA). Active-site nucleophile residues include Cys-45 and Sec-48. A cross-link (cysteinyl-selenocysteine (Cys-Sec)) is located at residues 45 to 48 (CGGU). A non-standard amino acid (selenocysteine) is located at residue Sec-48.

Belongs to the selenoprotein M/F family. Widely expressed.

The protein resides in the cytoplasm. It localises to the perinuclear region. Its subcellular location is the endoplasmic reticulum. The protein localises to the golgi apparatus. May function as a thiol-disulfide oxidoreductase that participates in disulfide bond formation. The chain is Selenoprotein M from Homo sapiens (Human).